The chain runs to 237 residues: ATP synthase subunit 4, mitochondrial (237 aa).

The N-terminal 30 residues, 1-30, are a transit peptide targeting the mitochondrion; sequence MFRALTLKASARPVVAGLCSRQAPIAAVRY.

It belongs to the eukaryotic ATPase B chain family.

The protein localises to the mitochondrion. Its subcellular location is the mitochondrion inner membrane. Its function is as follows. Mitochondrial membrane ATP synthase (F(1)F(0) ATP synthase or Complex V) produces ATP from ADP in the presence of a proton gradient across the membrane which is generated by electron transport complexes of the respiratory chain. F-type ATPases consist of two structural domains, F(1) - containing the extramembraneous catalytic core, and F(0) - containing the membrane proton channel, linked together by a central stalk and a peripheral stalk. During catalysis, ATP synthesis in the catalytic domain of F(1) is coupled via a rotary mechanism of the central stalk subunits to proton translocation. Part of the complex F(0) domain and the peripheric stalk, which acts as a stator to hold the catalytic alpha(3)beta(3) subcomplex and subunit a/ATP6 static relative to the rotary elements. The chain is ATP synthase subunit 4, mitochondrial (ATP4) from Kluyveromyces lactis (strain ATCC 8585 / CBS 2359 / DSM 70799 / NBRC 1267 / NRRL Y-1140 / WM37) (Yeast).